The sequence spans 336 residues: tRNA N6-adenosine threonylcarbamoyltransferase (336 aa).

The Fe cation site is built by H108 and H112. Residues L129–G133, D161, E178, and S258 each bind substrate. Position 286 (D286) interacts with Fe cation.

The protein belongs to the KAE1 / TsaD family. It depends on Fe(2+) as a cofactor.

It is found in the cytoplasm. The catalysed reaction is L-threonylcarbamoyladenylate + adenosine(37) in tRNA = N(6)-L-threonylcarbamoyladenosine(37) in tRNA + AMP + H(+). Functionally, required for the formation of a threonylcarbamoyl group on adenosine at position 37 (t(6)A37) in tRNAs that read codons beginning with adenine. Is probably involved in the transfer of the threonylcarbamoyl moiety of threonylcarbamoyl-AMP (TC-AMP) to the N6 group of A37. The polypeptide is tRNA N6-adenosine threonylcarbamoyltransferase (Pyrobaculum neutrophilum (strain DSM 2338 / JCM 9278 / NBRC 100436 / V24Sta) (Thermoproteus neutrophilus)).